The primary structure comprises 429 residues: Enolase (429 aa).

Gln-163 is a binding site for (2R)-2-phosphoglycerate. Glu-205 acts as the Proton donor in catalysis. Mg(2+)-binding residues include Asp-242, Glu-287, and Asp-314. (2R)-2-phosphoglycerate-binding residues include Lys-339, Arg-368, Ser-369, and Lys-390. The active-site Proton acceptor is Lys-339.

Belongs to the enolase family. Mg(2+) serves as cofactor.

The protein resides in the cytoplasm. It is found in the secreted. Its subcellular location is the cell surface. The catalysed reaction is (2R)-2-phosphoglycerate = phosphoenolpyruvate + H2O. The protein operates within carbohydrate degradation; glycolysis; pyruvate from D-glyceraldehyde 3-phosphate: step 4/5. Functionally, catalyzes the reversible conversion of 2-phosphoglycerate (2-PG) into phosphoenolpyruvate (PEP). It is essential for the degradation of carbohydrates via glycolysis. This is Enolase from Cupriavidus pinatubonensis (strain JMP 134 / LMG 1197) (Cupriavidus necator (strain JMP 134)).